An 89-amino-acid polypeptide reads, in one-letter code: HssA/B-like protein 21 (89 aa).

The protein belongs to the hssA/B family.

This is HssA/B-like protein 21 (hssl21) from Dictyostelium discoideum (Social amoeba).